The primary structure comprises 300 residues: Small ribosomal subunit protein uS2 (300 aa).

The segment at 228 to 300 is disordered; it reads RAGLSADKDA…PAAEAPSTEA (73 aa). The segment covering 258–300 has biased composition (low complexity); the sequence is AAPAAEAAPAAEAAPAAEAAPAAEAQAAPAAEAPAAEAPSTEA.

The protein belongs to the universal ribosomal protein uS2 family.

The chain is Small ribosomal subunit protein uS2 from Rhodococcus jostii (strain RHA1).